Consider the following 122-residue polypeptide: NADH-quinone oxidoreductase subunit A (122 aa).

The next 3 helical transmembrane spans lie at 10 to 30 (LIVFVFLCLGVLLPIGALTIG), 67 to 87 (FALLFVIFDVETVFLYPWAVV), and 91 to 111 (LGLFALVEMIIFIVLLAIGLI).

It belongs to the complex I subunit 3 family. In terms of assembly, NDH-1 is composed of 14 different subunits. Subunits NuoA, H, J, K, L, M, N constitute the membrane sector of the complex.

The protein resides in the cell membrane. It carries out the reaction a quinone + NADH + 5 H(+)(in) = a quinol + NAD(+) + 4 H(+)(out). Its function is as follows. NDH-1 shuttles electrons from NADH, via FMN and iron-sulfur (Fe-S) centers, to quinones in the respiratory chain. The immediate electron acceptor for the enzyme in this species is believed to be a menaquinone. Couples the redox reaction to proton translocation (for every two electrons transferred, four hydrogen ions are translocated across the cytoplasmic membrane), and thus conserves the redox energy in a proton gradient. In Geobacillus thermodenitrificans (strain NG80-2), this protein is NADH-quinone oxidoreductase subunit A.